Reading from the N-terminus, the 109-residue chain is MSRISSLQDPFLNALRKEKVSVSVYLVNGIKLQGQVEAFDQFCIVLRNTVNQMVYKHAISTIVPAKSVRMVYSSFNPYHQNSNDEQDENVDDIHSDDLEIQENEGNIHE.

The 60-residue stretch at 9-68 (DPFLNALRKEKVSVSVYLVNGIKLQGQVEAFDQFCIVLRNTVNQMVYKHAISTIVPAKSV) folds into the Sm domain. Residues 77–109 (PYHQNSNDEQDENVDDIHSDDLEIQENEGNIHE) form a disordered region.

The protein belongs to the Hfq family. In terms of assembly, homohexamer.

Functionally, RNA chaperone that binds small regulatory RNA (sRNAs) and mRNAs to facilitate mRNA translational regulation in response to envelope stress, environmental stress and changes in metabolite concentrations. Also binds with high specificity to tRNAs. In Francisella tularensis subsp. holarctica (strain FTNF002-00 / FTA), this protein is RNA-binding protein Hfq.